Here is a 333-residue protein sequence, read N- to C-terminus: GTPase Obg (333 aa).

Residues 1–158 (MFIDSAKIYV…RNIDLELKLL (158 aa)) enclose the Obg domain. The tract at residues 121–143 (HGGKGNQHFATPTNRAPRYSEPA) is disordered. The 165-residue stretch at 159 to 323 (ADIGLVGFPN…LKDVLWRIIQ (165 aa)) folds into the OBG-type G domain. Residues 165–172 (GFPNAGKS), 190–194 (FTTLE), 212–215 (DIPG), 279–282 (SKMD), and 304–306 (SSV) each bind GTP. Mg(2+) is bound by residues Ser-172 and Thr-192.

The protein belongs to the TRAFAC class OBG-HflX-like GTPase superfamily. OBG GTPase family. As to quaternary structure, monomer. Mg(2+) serves as cofactor.

The protein resides in the cytoplasm. In terms of biological role, an essential GTPase which binds GTP, GDP and possibly (p)ppGpp with moderate affinity, with high nucleotide exchange rates and a fairly low GTP hydrolysis rate. Plays a role in control of the cell cycle, stress response, ribosome biogenesis and in those bacteria that undergo differentiation, in morphogenesis control. The polypeptide is GTPase Obg (Chloroherpeton thalassium (strain ATCC 35110 / GB-78)).